A 145-amino-acid polypeptide reads, in one-letter code: UPF0735 ACT domain-containing protein CKL_0858 (145 aa).

The 76-residue stretch at 69-144 folds into the ACT domain; sequence TLGLTLAHKA…SVIKVNLAAV (76 aa).

This sequence belongs to the UPF0735 family.

The protein is UPF0735 ACT domain-containing protein CKL_0858 of Clostridium kluyveri (strain ATCC 8527 / DSM 555 / NBRC 12016 / NCIMB 10680 / K1).